The primary structure comprises 194 residues: Peptidyl-tRNA hydrolase (194 aa).

Tyrosine 16 is a tRNA binding site. The active-site Proton acceptor is the histidine 21. Residues phenylalanine 67, asparagine 69, and asparagine 115 each coordinate tRNA.

The protein belongs to the PTH family. As to quaternary structure, monomer.

It is found in the cytoplasm. It carries out the reaction an N-acyl-L-alpha-aminoacyl-tRNA + H2O = an N-acyl-L-amino acid + a tRNA + H(+). Its function is as follows. Hydrolyzes ribosome-free peptidyl-tRNAs (with 1 or more amino acids incorporated), which drop off the ribosome during protein synthesis, or as a result of ribosome stalling. Catalyzes the release of premature peptidyl moieties from peptidyl-tRNA molecules trapped in stalled 50S ribosomal subunits, and thus maintains levels of free tRNAs and 50S ribosomes. This is Peptidyl-tRNA hydrolase from Shigella flexneri.